The primary structure comprises 164 residues: FMN reductase (NADH) RutF (164 aa).

Belongs to the non-flavoprotein flavin reductase family. RutF subfamily.

The enzyme catalyses FMNH2 + NAD(+) = FMN + NADH + 2 H(+). Its function is as follows. Catalyzes the reduction of FMN to FMNH2 which is used to reduce pyrimidine by RutA via the Rut pathway. The chain is FMN reductase (NADH) RutF from Klebsiella pneumoniae subsp. pneumoniae (strain ATCC 700721 / MGH 78578).